Consider the following 557-residue polypeptide: Dihydroxy-acid dehydratase (557 aa).

Asp78 is a Mg(2+) binding site. Residue Cys119 coordinates [2Fe-2S] cluster. The Mg(2+) site is built by Asp120 and Lys121. At Lys121 the chain carries N6-carboxylysine. Residue Cys192 coordinates [2Fe-2S] cluster. Position 443 (Glu443) interacts with Mg(2+). Residue Ser469 is the Proton acceptor of the active site.

This sequence belongs to the IlvD/Edd family. In terms of assembly, homodimer. [2Fe-2S] cluster is required as a cofactor. Requires Mg(2+) as cofactor.

It catalyses the reaction (2R)-2,3-dihydroxy-3-methylbutanoate = 3-methyl-2-oxobutanoate + H2O. The enzyme catalyses (2R,3R)-2,3-dihydroxy-3-methylpentanoate = (S)-3-methyl-2-oxopentanoate + H2O. It participates in amino-acid biosynthesis; L-isoleucine biosynthesis; L-isoleucine from 2-oxobutanoate: step 3/4. The protein operates within amino-acid biosynthesis; L-valine biosynthesis; L-valine from pyruvate: step 3/4. Functionally, functions in the biosynthesis of branched-chain amino acids. Catalyzes the dehydration of (2R,3R)-2,3-dihydroxy-3-methylpentanoate (2,3-dihydroxy-3-methylvalerate) into 2-oxo-3-methylpentanoate (2-oxo-3-methylvalerate) and of (2R)-2,3-dihydroxy-3-methylbutanoate (2,3-dihydroxyisovalerate) into 2-oxo-3-methylbutanoate (2-oxoisovalerate), the penultimate precursor to L-isoleucine and L-valine, respectively. This Sulfurihydrogenibium sp. (strain YO3AOP1) protein is Dihydroxy-acid dehydratase.